We begin with the raw amino-acid sequence, 100 residues long: Urease subunit gamma (100 aa).

This sequence belongs to the urease gamma subunit family. As to quaternary structure, heterotrimer of UreA (gamma), UreB (beta) and UreC (alpha) subunits. Three heterotrimers associate to form the active enzyme.

The protein resides in the cytoplasm. The catalysed reaction is urea + 2 H2O + H(+) = hydrogencarbonate + 2 NH4(+). Its pathway is nitrogen metabolism; urea degradation; CO(2) and NH(3) from urea (urease route): step 1/1. This Cupriavidus taiwanensis (strain DSM 17343 / BCRC 17206 / CCUG 44338 / CIP 107171 / LMG 19424 / R1) (Ralstonia taiwanensis (strain LMG 19424)) protein is Urease subunit gamma.